A 78-amino-acid polypeptide reads, in one-letter code: Large ribosomal subunit protein bL28 (78 aa).

The interval 1 to 23 (MSRVCQVTGKKPMVGNNRSHAKN) is disordered.

It belongs to the bacterial ribosomal protein bL28 family.

In Shewanella frigidimarina (strain NCIMB 400), this protein is Large ribosomal subunit protein bL28.